The primary structure comprises 986 residues: MAGIFYFALFSCLFGICDAVTGSRVYPANEVTLLDSRSVQGELGWIASPLEGGWEEVSIMDEKNTPIRTYQVCNVMEPSQNNWLRTDWITREGAQRVYIEIKFTLRDCNSLPGVMGTCKETFNLYYYESDNDKERFIRENQFVKIDTIAADESFTQVDIGDRIMKLNTEIRDVGPLSKKGFYLAFQDVGACIALVSVRVFYKKCPLTVRNLAQFPDTITGADTSSLVEVRGSCVNNSEEKDVPKMYCGADGEWLVPIGNCLCNAGHEERSGECQACKIGYYKALSTDATCAKCPPHSYSVWEGATSCTCDRGFFRADNDAASMPCTRPPSAPLNLISNVNETSVNLEWSSPQNTGGRQDISYNVVCKKCGAGDPSKCRPCGSGVHYTPQQNGLKTTKVSITDLLAHTNYTFEIWAVNGVSKYNPNPDQSVSVTVTTNQAAPSSIALVQAKEVTRYSVALAWLEPDRPNGVILEYEVKYYEKDQNERSYRIVRTAARNTDIKGLNPLTSYVFHVRARTAAGYGDFSEPLEVTTNTVPSRIIGDGANSTVLLVSVSGSVVLVVILIAAFVISRRRSKYSKAKQEADEEKHLNQGVRTYVDPFTYEDPNQAVREFAKEIDASCIKIEKVIGVGEFGEVCSGRLKVPGKREICVAIKTLKAGYTDKQRRDFLSEASIMGQFDHPNIIHLEGVVTKCKPVMIITEYMENGSLDAFLRKNDGRFTVIQLVGMLRGIGSGMKYLSDMSYVHRDLAARNILVNSNLVCKVSDFGMSRVLEDDPEAAYTTRGGKIPIRWTAPEAIAYRKFTSASDVWSYGIVMWEVMSYGERPYWDMSNQDVIKAIEEGYRLPPPMDCPIALHQLMLDCWQKERSDRPKFGQIVNMLDKLIRNPNSLKRTGTESSRPNTALLDPSSPEFSAVVSVGDWLQAIKMDRYKDNFTAAGYTTLEAVVHVNQEDLARIGITAITHQNKILSSVQAMRTQMQQMHGRMVPV.

The signal sequence occupies residues 1–19 (MAGIFYFALFSCLFGICDA). At 20–547 (VTGSRVYPAN…RIIGDGANST (528 aa)) the chain is on the extracellular side. The Eph LBD domain occupies 30–209 (EVTLLDSRSV…FYKKCPLTVR (180 aa)). 3 N-linked (GlcNAc...) asparagine glycosylation sites follow: N235, N340, and N408. Fibronectin type-III domains are found at residues 328–439 (PPSA…TNQA) and 440–537 (APSS…TVPS). Residue N545 is glycosylated (N-linked (GlcNAc...) asparagine). The chain crosses the membrane as a helical span at residues 548 to 569 (VLLVSVSGSVVLVVILIAAFVI). The Cytoplasmic portion of the chain corresponds to 570–986 (SRRRSKYSKA…QQMHGRMVPV (417 aa)). A phosphotyrosine; by autocatalysis mark is found at Y596 and Y602. In terms of domain architecture, Protein kinase spans 621–882 (IKIEKVIGVG…QIVNMLDKLI (262 aa)). ATP-binding positions include 627–635 (IGVGEFGEV) and K653. Catalysis depends on D746, which acts as the Proton acceptor. 2 positions are modified to phosphotyrosine; by autocatalysis: Y779 and Y928. The region spanning 911–975 (SAVVSVGDWL…LSSVQAMRTQ (65 aa)) is the SAM domain. The PDZ-binding motif lies at 984 to 986 (VPV).

The protein belongs to the protein kinase superfamily. Tyr protein kinase family. Ephrin receptor subfamily. As to quaternary structure, heterotetramer upon binding of the ligand. The heterotetramer is composed of an ephrin dimer and a receptor dimer. Oligomerization is probably required to induce biological responses. Interacts (phosphorylated at position Tyr-602) with FYN. Interacts with CDK5, CDK5R1 and NGEF; upon activation by EFNA1 induces NGEF phosphorylation by the kinase CDK5. Interacts with CHN1; effector of EPHA4 in axon guidance linking EPHA4 activation to RAC1 regulation. Interacts (via PDZ motif) with SIPA1L1 (via PDZ domain); controls neuronal morphology through regulation of the RAP1 (RAP1A or RAP1B) and RAP2 (RAP2A, RAP2B or RAP2C) GTPases. Forms a ternary complex composed of ADAM10, CADH1 and EPHA4; within the complex, CADH1 is cleaved by ADAM10 which disrupts adherens junctions. In terms of tissue distribution, ubiquitous.

It localises to the cell membrane. The protein localises to the cell projection. It is found in the axon. The protein resides in the dendrite. Its subcellular location is the postsynaptic density membrane. It localises to the early endosome. The protein localises to the cell junction. It is found in the adherens junction. It carries out the reaction L-tyrosyl-[protein] + ATP = O-phospho-L-tyrosyl-[protein] + ADP + H(+). Its function is as follows. Receptor tyrosine kinase which binds membrane-bound ephrin family ligands residing on adjacent cells, leading to contact-dependent bidirectional signaling into neighboring cells. The signaling pathway downstream of the receptor is referred to as forward signaling while the signaling pathway downstream of the ephrin ligand is referred to as reverse signaling. Highly promiscuous, it has the unique property among Eph receptors to bind and to be physiologically activated by both GPI-anchored ephrin-A and transmembrane ephrin-B ligands including EFNA1 and EFNB3. Upon activation by ephrin ligands, modulates cell morphology and integrin-dependent cell adhesion through regulation of the Rac, Rap and Rho GTPases activity. Plays an important role in the development of the nervous system controlling different steps of axonal guidance including the establishment of the corticospinal projections. May also control the segregation of motor and sensory axons during neuromuscular circuit development. In addition to its role in axonal guidance plays a role in synaptic plasticity. Activated by EFNA1 phosphorylates CDK5 at 'Tyr-15' which in turn phosphorylates NGEF regulating RHOA and dendritic spine morphogenesis. In the nervous system, also plays a role in repair after injury preventing axonal regeneration and in angiogenesis playing a role in central nervous system vascular formation. Additionally, its promiscuity makes it available to participate in a variety of cell-cell signaling regulating for instance the development of the thymic epithelium. During development of the cochlear organ of Corti, regulates pillar cell separation by forming a ternary complex with ADAM10 and CADH1 which facilitates the cleavage of CADH1 by ADAM10 and disruption of adherens junctions. Phosphorylates CAPRIN1, promoting CAPRIN1-dependent formation of a membraneless compartment. In Homo sapiens (Human), this protein is Ephrin type-A receptor 4 (EPHA4).